The chain runs to 853 residues: NADH-quinone oxidoreductase subunit G 2 (853 aa).

Residues 1–78 enclose the 2Fe-2S ferredoxin-type domain; it reads MIKVTIDEQS…GMVVRTNTPL (78 aa). Residues C34, C45, C48, and C62 each coordinate [2Fe-2S] cluster. One can recognise a 4Fe-4S His(Cys)3-ligated-type domain in the interval 78–117; the sequence is LIEETRSSMLDMLLANHPLDCPICDKGGECELQDMVMAYG. [4Fe-4S] cluster contacts are provided by H94, C98, C101, C107, C148, C151, C154, C198, C224, C227, C231, and C259. 4Fe-4S ferredoxin-type domains are found at residues 139–170 and 179–209; these read PVII…LGTV and TGFE…FPYR. The 57-residue stretch at 217–273 folds into the 4Fe-4S Mo/W bis-MGD-type domain; it reads LAETDTICPHCGTGCQLTVGARKGEFMRVRSDWEHGVNRETLCVRGRFGLDFIESRD.

Belongs to the complex I 75 kDa subunit family. [2Fe-2S] cluster serves as cofactor. The cofactor is [4Fe-4S] cluster.

The enzyme catalyses a quinone + NADH + 5 H(+)(in) = a quinol + NAD(+) + 4 H(+)(out). Functionally, NDH-1 shuttles electrons from NADH, via FMN and iron-sulfur (Fe-S) centers, to quinones in the respiratory chain. The immediate electron acceptor for the enzyme in this species is believed to be ubiquinone. Couples the redox reaction to proton translocation (for every two electrons transferred, four hydrogen ions are translocated across the cytoplasmic membrane), and thus conserves the redox energy in a proton gradient. This chain is NADH-quinone oxidoreductase subunit G 2 (nuoG2), found in Rhizobium meliloti (strain 1021) (Ensifer meliloti).